The chain runs to 316 residues: Ribosomal protein L11 methyltransferase (316 aa).

S-adenosyl-L-methionine-binding residues include threonine 157, glycine 178, aspartate 200, and asparagine 243.

It belongs to the methyltransferase superfamily. PrmA family.

The protein localises to the cytoplasm. It carries out the reaction L-lysyl-[protein] + 3 S-adenosyl-L-methionine = N(6),N(6),N(6)-trimethyl-L-lysyl-[protein] + 3 S-adenosyl-L-homocysteine + 3 H(+). Methylates ribosomal protein L11. In Streptococcus pneumoniae serotype 2 (strain D39 / NCTC 7466), this protein is Ribosomal protein L11 methyltransferase.